Here is a 180-residue protein sequence, read N- to C-terminus: ATP synthase subunit delta (180 aa).

It belongs to the ATPase delta chain family. As to quaternary structure, F-type ATPases have 2 components, F(1) - the catalytic core - and F(0) - the membrane proton channel. F(1) has five subunits: alpha(3), beta(3), gamma(1), delta(1), epsilon(1). F(0) has three main subunits: a(1), b(2) and c(10-14). The alpha and beta chains form an alternating ring which encloses part of the gamma chain. F(1) is attached to F(0) by a central stalk formed by the gamma and epsilon chains, while a peripheral stalk is formed by the delta and b chains.

Its subcellular location is the cell inner membrane. In terms of biological role, f(1)F(0) ATP synthase produces ATP from ADP in the presence of a proton or sodium gradient. F-type ATPases consist of two structural domains, F(1) containing the extramembraneous catalytic core and F(0) containing the membrane proton channel, linked together by a central stalk and a peripheral stalk. During catalysis, ATP synthesis in the catalytic domain of F(1) is coupled via a rotary mechanism of the central stalk subunits to proton translocation. Its function is as follows. This protein is part of the stalk that links CF(0) to CF(1). It either transmits conformational changes from CF(0) to CF(1) or is implicated in proton conduction. The sequence is that of ATP synthase subunit delta from Acidovorax sp. (strain JS42).